The primary structure comprises 428 residues: MSLDLPPPPARGCRSTEVLKERGQREVFCGLTGIIWLHRKMQDAFFLVVGSRTCAHLLQSAAGVMIFAEPRFGTAVLEEKDLAGLADANAELDREVDRLLARRPDIRQLFLVGSCPSEVIKLDLHRAAERLSAHHGPAVRVYNFSGSGIETTFTQGEDACLASIVPTLPATEARELLLVGALPDVVEDQAVSLLTQLGIGPVRCLPAHHAAEAPGVGPNTVFALVQPFLGDTHGALTRRGARHIAAPFPFGEEGTTLWLKAIADEFGVSAETFEAVTAAPRARARKAVAAASEGLRGKSVFFLPDSQLEPSLARFLTRECGMSAVEVGTPFLHRGILGPDLDLLAEGPVLSEGQDVERQLDRVRAARPDLTVCGLGLANPLEAEGFTTKWAIELVFTPVHFYEQAGDLAGLFSRPVRRRAILRREAAE.

Residues C29, C54, and C115 each coordinate [4Fe-4S] cluster.

This sequence belongs to the BchN/ChlN family. Protochlorophyllide reductase is composed of three subunits; BchL, BchN and BchB. Forms a heterotetramer of two BchB and two BchN subunits. [4Fe-4S] cluster serves as cofactor.

The enzyme catalyses chlorophyllide a + oxidized 2[4Fe-4S]-[ferredoxin] + 2 ADP + 2 phosphate = protochlorophyllide a + reduced 2[4Fe-4S]-[ferredoxin] + 2 ATP + 2 H2O. Its pathway is porphyrin-containing compound metabolism; bacteriochlorophyll biosynthesis (light-independent). Its function is as follows. Component of the dark-operative protochlorophyllide reductase (DPOR) that uses Mg-ATP and reduced ferredoxin to reduce ring D of protochlorophyllide (Pchlide) to form chlorophyllide a (Chlide). This reaction is light-independent. The NB-protein (BchN-BchB) is the catalytic component of the complex. The protein is Light-independent protochlorophyllide reductase subunit N of Cereibacter sphaeroides (strain KD131 / KCTC 12085) (Rhodobacter sphaeroides).